Here is an 859-residue protein sequence, read N- to C-terminus: Rod cGMP-specific 3',5'-cyclic phosphodiesterase subunit alpha (859 aa).

G2 carries the N-acetylglycine modification. GAF domains follow at residues 73–222 (QAEK…NLIM) and 254–431 (DIER…GWSV). The PDEase domain occupies 483-816 (EEEELAEILQ…KEWKALADEY (334 aa)). The active-site Proton donor is H559. A divalent metal cation-binding residues include H563, H599, D600, and D720. Residues 821-859 (KGLEEEKQKQQAANQAAAGSQHGGKQPGGGPASKSCCVQ) form a disordered region. Over residues 830–840 (QQAANQAAAGS) the composition is skewed to low complexity. Positions 841–851 (QHGGKQPGGGP) are enriched in gly residues. C856 carries the post-translational modification Cysteine methyl ester. C856 carries S-farnesyl cysteine lipidation. The propeptide at 857-859 (CVQ) is removed in mature form.

Belongs to the cyclic nucleotide phosphodiesterase family. In terms of assembly, oligomer composed of two catalytic chains (alpha and beta), an inhibitory chain (gamma) and the delta chain. The cofactor is a divalent metal cation.

The protein localises to the cell membrane. It localises to the cell projection. Its subcellular location is the cilium. The protein resides in the photoreceptor outer segment. It catalyses the reaction 3',5'-cyclic GMP + H2O = GMP + H(+). Its function is as follows. Rod-specific cGMP phosphodiesterase that catalyzes the hydrolysis of 3',5'-cyclic GMP. This protein participates in processes of transmission and amplification of the visual signal. The chain is Rod cGMP-specific 3',5'-cyclic phosphodiesterase subunit alpha from Bos taurus (Bovine).